A 653-amino-acid chain; its full sequence is Choline transporter-like protein 3 (653 aa).

Residues 34 to 54 traverse the membrane as a helical segment; it reads WLFLFFLFWTGLVFIMGYSVV. Residues N136 and N151 are each glycosylated (N-linked (GlcNAc...) asparagine). The next 5 membrane-spanning stretches (helical) occupy residues 213 to 233, 243 to 263, 284 to 304, 334 to 354, and 384 to 404; these read DTILGLCILALALSLAMMFTF, IFISLVILGLLFVCGVLWWLY, VLGFAIVSTGITAVLLVLIFV, LWTFAILIFFWVLWVAVLLSL, and LIGLIWTSEFILACQQMTIAG. Residues N412, N503, and N521 are each glycosylated (N-linked (GlcNAc...) asparagine). The next 2 membrane-spanning stretches (helical) occupy residues 534 to 554 and 563 to 583; these read FIIFLGKVLVVCFTVFGGLMA and VWAVPLLLVAFFAYLVAHSFL. A disordered region spans residues 632-653; that stretch reads RAQQDKHSLRNEEGTELQAIVR. Positions 634–644 are enriched in basic and acidic residues; sequence QQDKHSLRNEE.

Belongs to the CTL (choline transporter-like) family.

The protein localises to the membrane. The polypeptide is Choline transporter-like protein 3 (SLC44A3) (Homo sapiens (Human)).